The following is a 63-amino-acid chain: Ferredoxin (63 aa).

The region spanning 3-31 is the 4Fe-4S ferredoxin-type domain; the sequence is WKVSVDVDTCIGDAICASLCPDVFEMGDD. [4Fe-4S] cluster contacts are provided by Cys12, Asp15, and Cys18. A disulfide bridge connects residues Cys22 and Cys45. Cys53 lines the [4Fe-4S] cluster pocket.

[4Fe-4S] cluster is required as a cofactor. [3Fe-4S] cluster serves as cofactor.

Ferredoxins are iron-sulfur proteins that transfer electrons in a wide variety of metabolic reactions. This is Ferredoxin (fdxA) from Thermococcus kodakarensis (strain ATCC BAA-918 / JCM 12380 / KOD1) (Pyrococcus kodakaraensis (strain KOD1)).